A 634-amino-acid polypeptide reads, in one-letter code: Lamin tail domain-containing protein 2 (634 aa).

The tract at residues 1 to 44 (MRWLRPAGRRREQESVSGHLGPPAGAPAAPETPTCLPDTTPHPA) is disordered. A coiled-coil region spans residues 106-169 (SHSQEKLLQN…QKSCLLQLAR (64 aa)). A compositionally biased stretch (polar residues) spans 228 to 237 (FTNMEPSSKQ). Disordered stretches follow at residues 228–349 (FTNM…TDPD) and 464–575 (HRIP…PAEA). Over residues 276–287 (SSSGGADSDSSS) the composition is skewed to low complexity. A compositionally biased stretch (polar residues) spans 310 to 321 (SEQALVQAGSYS). Residues 322–337 (RDSEDLQKTHSPRHGE) are compositionally biased toward basic and acidic residues. Positions 350–468 (HWSPELLQSP…EVLSEHRIPR (119 aa)) constitute an LTD domain. Basic residues predominate over residues 502 to 513 (PPRPPRPLRKGR). Residues 540 to 550 (HAREGPARPEN) show a composition bias toward basic and acidic residues.

The polypeptide is Lamin tail domain-containing protein 2 (LMNTD2) (Homo sapiens (Human)).